Here is a 198-residue protein sequence, read N- to C-terminus: Pyridoxal 5'-phosphate synthase subunit PdxT (198 aa).

52–54 (GES) provides a ligand contact to L-glutamine. Cysteine 84 serves as the catalytic Nucleophile. L-glutamine contacts are provided by residues arginine 115 and 143–144 (IR). Residues histidine 179 and glutamate 181 each act as charge relay system in the active site.

Belongs to the glutaminase PdxT/SNO family. As to quaternary structure, in the presence of PdxS, forms a dodecamer of heterodimers. Only shows activity in the heterodimer.

The catalysed reaction is aldehydo-D-ribose 5-phosphate + D-glyceraldehyde 3-phosphate + L-glutamine = pyridoxal 5'-phosphate + L-glutamate + phosphate + 3 H2O + H(+). The enzyme catalyses L-glutamine + H2O = L-glutamate + NH4(+). Its pathway is cofactor biosynthesis; pyridoxal 5'-phosphate biosynthesis. Functionally, catalyzes the hydrolysis of glutamine to glutamate and ammonia as part of the biosynthesis of pyridoxal 5'-phosphate. The resulting ammonia molecule is channeled to the active site of PdxS. The polypeptide is Pyridoxal 5'-phosphate synthase subunit PdxT (Methanococcoides burtonii (strain DSM 6242 / NBRC 107633 / OCM 468 / ACE-M)).